The chain runs to 196 residues: MFCEKAMELVRELHRAPEGQLPAFNEDGLRQVLEEMKALYEQNQSDVNEAKSAGRGDLIPTVKFRHCALLRNRRCTIAYLYDRLLRIRALRWEYGSVLPNSLRFHMSAEETEWFNHYKKSLATYMRSLGGDEGLDITQDVKPPKSLYIEVRCLKDYGEFEVDDGTSVLLKKNSQHFLPRWKCEQLIRQGVLEHVLS.

The protein belongs to the GINS1/PSF1 family. As to quaternary structure, component of the GINS complex which is a heterotetramer of GINS1, GINS2, GINS3 and GINS4. Forms a stable subcomplex with GINS4. GINS complex interacts with DNA primase in vitro. Component of the CMG helicase complex, a hexameric ring of related MCM2-7 subunits stabilized by CDC45 and the tetrameric GINS complex.

It localises to the nucleus. Its subcellular location is the chromosome. Required for correct functioning of the GINS complex, a complex that plays an essential role in the initiation of DNA replication, and progression of DNA replication forks. GINS complex is a core component of CDC45-MCM-GINS (CMG) helicase, the molecular machine that unwinds template DNA during replication, and around which the replisome is built. The polypeptide is DNA replication complex GINS protein PSF1 (Gins1) (Mus musculus (Mouse)).